The following is a 973-amino-acid chain: MSVNEDLSHLGVFSVDQENLERDVTNTASEYIAHESREIEKKRLQKVRKEISSVKEKIRRLDERIDSRLTKISVKENFRKQLSKFRDTLQSLQSDENDIKRRLNNEDSANAPGIGAFSTEELERQELIRTGKVTPFRNLSGLQKEVDFDDESSIREAVIKSEGTYYETAPHLSSEPSNIDHGIIPRDEKDEYVTVDAVTEKVVTAAIDDGDDLVYRQRLNAWCANRKELRDQASASENNKDRGEFEGKDEWLLPHPSKKGQTFEGGFTIPGDIRPHLFRYQVTCVQWLWELYCQEAGGIIGDEMGLGKTIQIVSFLSSLHHSGKFQKPALIVCPATLMKQWVNEFHTWWAPLRVVVLHATGSGQRASREKRQYESDASESEAEESKTSIKLRGASSSFHRYAKNLVESVFTRGHILITTYAGLRIYGDLILPREWGYCVLDEGHKIRNPDSEISISCKQIRTVNRIILSGTPIQNNLTELWNLFDFVFPGRLGTLPVFQNQFALPINIGGYANASNVQVQTAYKCACMLRDLISPYLLRRMKLDVAADLPKKSEQVLFCKLTPLQRKAYQDFLQGSDMQKILNGKRQMLYGIDILRKICNHPDLVTREYLLHKEDYNYGDPEKSGKLKVIRALLTLWKKQGHRTLLFSQTRQMLDILEIGLKDLPDVHYCRMDGSTSIALRQDLVDNFNKNEYFDVFLLTTRVGGLGVNLTGADRVILFDPDWNPSTDAQARERAWRLGQKKDVVVYRLMTAGTIEEKIYHRQIFKQFLTNKILKDPKQRRFFKMTDLHDLFTLGDNKTEGTETGSMFLGSERVLRKDNSSRNGNEAEDIPARDRKKHKIHDKGKKVNSSKVFEKMGIASMEKYKPPQESNVTKTNSDSTLGDDSVLDDIFASAGIQSTLKHDDIMEASQTESILVEKEATRVANEALRAVSSFRRPPRQLIPPQQSTNVPGTSKPSGPITSSTLLARLKQRR.

The stretch at Glu-35–Asp-107 forms a coiled coil. A disordered region spans residues Arg-230–Trp-251. Residues Asn-238–Trp-251 show a composition bias toward basic and acidic residues. The Helicase ATP-binding domain occupies Trp-289 to Gly-490. Position 302-309 (Asp-302–Thr-309) interacts with ATP. Positions Ser-367–Lys-386 are disordered. Residues Asp-441–His-444 carry the DEAH box motif. Residues Val-629–His-789 enclose the Helicase C-terminal domain. Disordered regions lie at residues Glu-803–Lys-846, Lys-863–Gly-882, and Ala-930–Arg-973. A compositionally biased stretch (basic residues) spans Asp-834–Lys-846. Polar residues-rich tracts occupy residues Gln-868–Gly-882 and Ser-947–Leu-965.

The protein localises to the cytoplasm. It localises to the nucleus. Its function is as follows. Involved in transcription-coupled repair (TCR). This is DNA repair protein rhp26 (rhp26) from Schizosaccharomyces pombe (strain 972 / ATCC 24843) (Fission yeast).